Reading from the N-terminus, the 292-residue chain is Proteasome subunit beta (292 aa).

The propeptide at 1-62 (MSESLGSVPG…HRAADDIPHG (62 aa)) is removed in mature form; by autocatalysis. The Nucleophile role is filled by T63.

The protein belongs to the peptidase T1B family. In terms of assembly, the 20S proteasome core is composed of 14 alpha and 14 beta subunits that assemble into four stacked heptameric rings, resulting in a barrel-shaped structure. The two inner rings, each composed of seven catalytic beta subunits, are sandwiched by two outer rings, each composed of seven alpha subunits. The catalytic chamber with the active sites is on the inside of the barrel. Has a gated structure, the ends of the cylinder being occluded by the N-termini of the alpha-subunits. Is capped by the proteasome-associated ATPase, ARC.

Its subcellular location is the cytoplasm. The catalysed reaction is Cleavage of peptide bonds with very broad specificity.. The protein operates within protein degradation; proteasomal Pup-dependent pathway. With respect to regulation, the formation of the proteasomal ATPase ARC-20S proteasome complex, likely via the docking of the C-termini of ARC into the intersubunit pockets in the alpha-rings, may trigger opening of the gate for substrate entry. Interconversion between the open-gate and close-gate conformations leads to a dynamic regulation of the 20S proteasome proteolysis activity. Component of the proteasome core, a large protease complex with broad specificity involved in protein degradation. The sequence is that of Proteasome subunit beta from Gordonia bronchialis (strain ATCC 25592 / DSM 43247 / BCRC 13721 / JCM 3198 / KCTC 3076 / NBRC 16047 / NCTC 10667) (Rhodococcus bronchialis).